The sequence spans 113 residues: MTSEQFEYHLTGKEILEKEFKTGLRGYSPEDVDEFLDMVIKDYSTFTQEIEALQAENIRLVQELDNAPLRTSTQPAPTFQAAAQPAGTTNFDILKRLSNLEKHVFGNKLDDNE.

Positions 36–68 (LDMVIKDYSTFTQEIEALQAENIRLVQELDNAP) form a coiled coil.

It belongs to the GpsB family. Forms polymers through the coiled coil domains. Interacts with PBP1, MreC and EzrA.

It is found in the cytoplasm. Functionally, divisome component that associates with the complex late in its assembly, after the Z-ring is formed, and is dependent on DivIC and PBP2B for its recruitment to the divisome. Together with EzrA, is a key component of the system that regulates PBP1 localization during cell cycle progression. Its main role could be the removal of PBP1 from the cell pole after pole maturation is completed. Also contributes to the recruitment of PBP1 to the division complex. Not essential for septum formation. This chain is Cell cycle protein GpsB, found in Listeria monocytogenes serotype 4b (strain CLIP80459).